Reading from the N-terminus, the 376-residue chain is UPF0754 membrane protein BH1148 (376 aa).

2 helical membrane passes run 3 to 23 (LILF…SLAI) and 355 to 375 (YLGA…ILLI).

The protein belongs to the UPF0754 family.

It is found in the cell membrane. In Halalkalibacterium halodurans (strain ATCC BAA-125 / DSM 18197 / FERM 7344 / JCM 9153 / C-125) (Bacillus halodurans), this protein is UPF0754 membrane protein BH1148.